The chain runs to 154 residues: Cyanate hydratase (154 aa).

Active-site residues include Arg-100, Glu-103, and Ser-126.

Belongs to the cyanase family.

The enzyme catalyses cyanate + hydrogencarbonate + 3 H(+) = NH4(+) + 2 CO2. In terms of biological role, catalyzes the reaction of cyanate with bicarbonate to produce ammonia and carbon dioxide. The polypeptide is Cyanate hydratase (Aspergillus clavatus (strain ATCC 1007 / CBS 513.65 / DSM 816 / NCTC 3887 / NRRL 1 / QM 1276 / 107)).